A 393-amino-acid chain; its full sequence is Formate-dependent phosphoribosylglycinamide formyltransferase (393 aa).

N(1)-(5-phospho-beta-D-ribosyl)glycinamide-binding positions include 22-23 (EL) and Glu82. ATP is bound by residues Arg114, Lys155, 160-165 (SSGKGQ), 195-198 (EGLV), and Glu203. One can recognise an ATP-grasp domain in the interval 119-308 (RLAAETLQLP…EFALHVRAFL (190 aa)). Glu267 and Glu279 together coordinate Mg(2+). N(1)-(5-phospho-beta-D-ribosyl)glycinamide contacts are provided by residues Asp286, Lys355, and 362 to 363 (RR).

Belongs to the PurK/PurT family. Homodimer.

It catalyses the reaction N(1)-(5-phospho-beta-D-ribosyl)glycinamide + formate + ATP = N(2)-formyl-N(1)-(5-phospho-beta-D-ribosyl)glycinamide + ADP + phosphate + H(+). The protein operates within purine metabolism; IMP biosynthesis via de novo pathway; N(2)-formyl-N(1)-(5-phospho-D-ribosyl)glycinamide from N(1)-(5-phospho-D-ribosyl)glycinamide (formate route): step 1/1. Functionally, involved in the de novo purine biosynthesis. Catalyzes the transfer of formate to 5-phospho-ribosyl-glycinamide (GAR), producing 5-phospho-ribosyl-N-formylglycinamide (FGAR). Formate is provided by PurU via hydrolysis of 10-formyl-tetrahydrofolate. This Yersinia pseudotuberculosis serotype IB (strain PB1/+) protein is Formate-dependent phosphoribosylglycinamide formyltransferase.